The following is a 355-amino-acid chain: Inositol polyphosphate multikinase (355 aa).

Met1 carries the post-translational modification N-acetylmethionine. Lys31 is a binding site for ATP. A Phosphoserine modification is found at Ser97. ATP contacts are provided by residues Glu118–Leu120 and Asp131. Substrate is bound at residue Pro127–Gly135. Residues Glu271 and Asn274 each coordinate Ca(2+). Acidic residues predominate over residues Phe284–Gly304. The interval Phe284–Ser317 is disordered. Position 325 (Asp325) interacts with ATP. Residue Gly334 participates in Ca(2+) binding.

Belongs to the inositol phosphokinase (IPK) family. In terms of assembly, interacts with ARG80 and MCM1. Ca(2+) is required as a cofactor.

The protein localises to the nucleus. It catalyses the reaction 1D-myo-inositol 1,4,5-trisphosphate + 2 ATP = 1D-myo-inositol 1,3,4,5,6-pentakisphosphate + 2 ADP + 2 H(+). The enzyme catalyses 1D-myo-inositol 1,4,5-trisphosphate + ATP = 1D-myo-inositol 1,4,5,6-tetrakisphosphate + ADP + H(+). It carries out the reaction 1D-myo-inositol 1,4,5-trisphosphate + ATP = 1D-myo-inositol 1,3,4,5-tetrakisphosphate + ADP + H(+). The catalysed reaction is 1D-myo-inositol 1,4,5,6-tetrakisphosphate + ATP = 1D-myo-inositol 1,3,4,5,6-pentakisphosphate + ADP + H(+). It catalyses the reaction a 1,2-diacyl-sn-glycero-3-phospho-(1D-myo-inositol-4,5-bisphosphate) + ATP = a 1,2-diacyl-sn-glycero-3-phospho-(1D-myo-inositol-3,4,5-trisphosphate) + ADP + H(+). Inositol phosphate kinase with both monophosphoinositol and diphosphoinositol polyphosphate synthase activities. Able to phosphorylate inositol 1,4,5-trisphosphate (Ins(1,4,5)P3) on both the carbon-3 and carbon-6 positions to synthesize inositol 1,3,4,5-tetrakisphosphate (Ins(1,3,4,5)P4) and inositol 1,4,5,6-tetrakisphosphate (Ins(1,4,5,6)P4), and then to subsequently phosphorylate and convert either isomer of InsP4 to inositol 1,3,4,5,6-pentakisphosphate (Ins(1,3,4,5,6)P5). Its predominant in vivo catalytic function is to convert Ins(1,4,5)P3 to Ins(1,4,5,6)P4 to Ins(1,3,4,5,6)P5 via 6- and 3-kinase activities. It can also use Ins(1,3,4,5,6)P5 as a substrate and act as a diphosphoinositol polyphosphate synthase to generate two different isomers of PP-InsP4. Also has a role in transcription regulation. Forms a complex with ARG80, ARG81 and MCM1 (ArgR-MCM1), which coordinates the expression of arginine anabolic and catabolic genes in response to arginine. Recruits ARG80 and MCM21 to stabilize them. Neither the kinase activity nor inositol phosphates are required for the formation of ArgR-MCM1 transcriptional complexes on DNA promoter elements and the control of arginine metabolism. In contrast, only the catalytic activity is required for PHO gene repression by phosphate and for NCR gene activation in response to nitrogen availability, indicating a role for inositol pyrophosphates in these controls. Inositol polyphosphates may be involved in the regulation of chromatin remodeling of transcription. Regulates nuclear mRNA export via inositol phosphate metabolism. Also has lipid kinase activity, transforming the lipid inositol phosphatidylinositol 4,5-bisphosphate (PI(4,5)P2) into phosphatidylinositol 3,4,5-trisphosphate (PI(3,4,5)P3) in the nucleus. Its kinase activity is necessary for the propagation of most [PSI+] prion variants. This Saccharomyces cerevisiae (strain ATCC 204508 / S288c) (Baker's yeast) protein is Inositol polyphosphate multikinase (ARG82).